Consider the following 741-residue polypeptide: Beta-galactosidase 10 (741 aa).

The signal sequence occupies residues 1 to 29 (MNRVTTESIASTAILVVMVFLFSWRSIEA). Residue N31 is glycosylated (N-linked (GlcNAc...) asparagine). E188 functions as the Proton donor in the catalytic mechanism. E257 (nucleophile) is an active-site residue. Residues N358, N396, N469, N525, and N583 are each glycosylated (N-linked (GlcNAc...) asparagine).

Belongs to the glycosyl hydrolase 35 family. Ubiquitous.

It is found in the secreted. The protein localises to the extracellular space. It localises to the apoplast. The catalysed reaction is Hydrolysis of terminal non-reducing beta-D-galactose residues in beta-D-galactosides.. This chain is Beta-galactosidase 10 (BGAL10), found in Arabidopsis thaliana (Mouse-ear cress).